The following is a 379-amino-acid chain: Small ribosomal subunit protein uS2cy (379 aa).

An N-terminal extension region spans residues 1–94 (MKLVQFFEIG…MGTSSNRAKS (94 aa)). The disordered stretch occupies residues 83–106 (NQMGTSSNRAKSTDTPAVSTSQNV).

Belongs to the universal ribosomal protein uS2 family.

It localises to the plastid. The protein resides in the chloroplast. This chain is Small ribosomal subunit protein uS2cy (rps2-2), found in Tetradesmus obliquus (Green alga).